Consider the following 288-residue polypeptide: NAD(P)H-hydrate epimerase (288 aa).

The N-terminal 47 residues, 1–47, are a transit peptide targeting the mitochondrion; it reads MSRLRALLGLGLLVAGSRVPRIKSQTIACRSGPTWWGPQRLNSGGRW. Ser49 carries the post-translational modification Phosphoserine. Positions 65-275 constitute a YjeF N-terminal domain; it reads AQAVDQELFN…ALEKKYQLNL (211 aa). Position 119-123 (119-123) interacts with (6S)-NADPHX; it reads NNGGD. A K(+)-binding site is contributed by Asn120. Position 144 is an N6-succinyllysine (Lys144). Asp185 contacts K(+). (6S)-NADPHX contacts are provided by residues 189-195 and Asp218; that span reads GFSFKGD. Ser221 contacts K(+).

This sequence belongs to the NnrE/AIBP family. Homodimer. Interacts with APOA1 and APOA2. It depends on K(+) as a cofactor. In terms of processing, undergoes physiological phosphorylation during sperm capacitation, downstream to PKA activation. Ubiquitously expressed, with highest levels in kidney, heart and liver. Present in cerebrospinal fluid and urine but not in serum from healthy patients. Present in serum of sepsis patients (at protein level).

The protein localises to the mitochondrion. It localises to the secreted. It carries out the reaction (6R)-NADHX = (6S)-NADHX. The catalysed reaction is (6R)-NADPHX = (6S)-NADPHX. Functionally, catalyzes the epimerization of the S- and R-forms of NAD(P)HX, a damaged form of NAD(P)H that is a result of enzymatic or heat-dependent hydration. This is a prerequisite for the S-specific NAD(P)H-hydrate dehydratase to allow the repair of both epimers of NAD(P)HX. Accelerates cholesterol efflux from endothelial cells to high-density lipoprotein (HDL) and thereby regulates angiogenesis. The polypeptide is NAD(P)H-hydrate epimerase (Homo sapiens (Human)).